A 191-amino-acid polypeptide reads, in one-letter code: dCTP deaminase (191 aa).

Residues 112 to 117 (KSTYAR), 136 to 138 (TLE), Q157, Y173, and Q183 contribute to the dCTP site. Catalysis depends on E138, which acts as the Proton donor/acceptor.

This sequence belongs to the dCTP deaminase family. Homotrimer.

The enzyme catalyses dCTP + H2O + H(+) = dUTP + NH4(+). The protein operates within pyrimidine metabolism; dUMP biosynthesis; dUMP from dCTP (dUTP route): step 1/2. Functionally, catalyzes the deamination of dCTP to dUTP. This chain is dCTP deaminase, found in Psychrobacter arcticus (strain DSM 17307 / VKM B-2377 / 273-4).